A 269-amino-acid polypeptide reads, in one-letter code: Meiotically up-regulated gene 43 protein (269 aa).

The protein localises to the mitochondrion. Functionally, has a role in meiosis. In Schizosaccharomyces pombe (strain 972 / ATCC 24843) (Fission yeast), this protein is Meiotically up-regulated gene 43 protein (mug43).